The sequence spans 559 residues: U-box domain-containing protein 41 (559 aa).

2 disordered regions span residues 1–30 (MGGN…KHDE) and 121–156 (RMDK…SPSD). Residues 12–24 (HQRSSSATTTTLP) are compositionally biased toward polar residues. Residues 30 to 104 (ETPPEFLCPI…FSWCDRQKVD (75 aa)) enclose the U-box domain. ARM repeat units follow at residues 266 to 305 (EDLR…NLSL), 307 to 346 (KQNK…SLAL), 348 to 388 (DENK…HLSL), 390 to 427 (PSNR…NLAA), and 428 to 472 (CPDG…TLCQ).

It carries out the reaction S-ubiquitinyl-[E2 ubiquitin-conjugating enzyme]-L-cysteine + [acceptor protein]-L-lysine = [E2 ubiquitin-conjugating enzyme]-L-cysteine + N(6)-ubiquitinyl-[acceptor protein]-L-lysine.. It participates in protein modification; protein ubiquitination. In terms of biological role, functions as an E3 ubiquitin ligase. This Arabidopsis thaliana (Mouse-ear cress) protein is U-box domain-containing protein 41 (PUB41).